The primary structure comprises 267 residues: 5'-nucleotidase SurE (267 aa).

A divalent metal cation-binding residues include aspartate 14, aspartate 15, serine 45, and asparagine 100.

The protein belongs to the SurE nucleotidase family. A divalent metal cation is required as a cofactor.

It localises to the cytoplasm. It catalyses the reaction a ribonucleoside 5'-phosphate + H2O = a ribonucleoside + phosphate. Functionally, nucleotidase that shows phosphatase activity on nucleoside 5'-monophosphates. The polypeptide is 5'-nucleotidase SurE (Methanosarcina barkeri (strain Fusaro / DSM 804)).